The following is a 64-amino-acid chain: Phi-buthitoxin-Hj1a (64 aa).

An N-terminal signal peptide occupies residues 1-18 (MNSFVVVLLLFIAILCNA). Disulfide bonds link C29-C43, C36-C49, and C42-C58.

Belongs to the scorpion calcin-like family. As to expression, expressed by the venom gland.

It is found in the secreted. May increase intracellular calcium release through the activation of nuclear inositol 1,4,5-trisphosphate receptors (ITPR) of cardiomyocytes, thereby causing an increase in the contraction frequency of these cells. In Hottentotta judaicus (Black scorpion), this protein is Phi-buthitoxin-Hj1a.